Reading from the N-terminus, the 395-residue chain is Formate-dependent phosphoribosylglycinamide formyltransferase (395 aa).

N(1)-(5-phospho-beta-D-ribosyl)glycinamide-binding positions include 22 to 23 (EL) and Glu-82. Residues Arg-115, Lys-156, 161-166 (SSGKGQ), 196-199 (EGFI), and Glu-204 each bind ATP. Residues 120-309 (RLAAETLGLP…EFALHARAIL (190 aa)) form the ATP-grasp domain. Mg(2+) is bound by residues Glu-268 and Glu-280. N(1)-(5-phospho-beta-D-ribosyl)glycinamide is bound by residues Asp-287, Lys-356, and 363–364 (RR).

This sequence belongs to the PurK/PurT family. In terms of assembly, homodimer.

The catalysed reaction is N(1)-(5-phospho-beta-D-ribosyl)glycinamide + formate + ATP = N(2)-formyl-N(1)-(5-phospho-beta-D-ribosyl)glycinamide + ADP + phosphate + H(+). The protein operates within purine metabolism; IMP biosynthesis via de novo pathway; N(2)-formyl-N(1)-(5-phospho-D-ribosyl)glycinamide from N(1)-(5-phospho-D-ribosyl)glycinamide (formate route): step 1/1. Functionally, involved in the de novo purine biosynthesis. Catalyzes the transfer of formate to 5-phospho-ribosyl-glycinamide (GAR), producing 5-phospho-ribosyl-N-formylglycinamide (FGAR). Formate is provided by PurU via hydrolysis of 10-formyl-tetrahydrofolate. This is Formate-dependent phosphoribosylglycinamide formyltransferase from Stenotrophomonas maltophilia (strain R551-3).